Consider the following 194-residue polypeptide: dCTP deaminase (194 aa).

DCTP-binding positions include 110 to 115, D128, 136 to 138, Y171, K178, and Q182; these read RSSLAR and VLE. E138 functions as the Proton donor/acceptor in the catalytic mechanism.

This sequence belongs to the dCTP deaminase family. In terms of assembly, homotrimer.

The catalysed reaction is dCTP + H2O + H(+) = dUTP + NH4(+). Its pathway is pyrimidine metabolism; dUMP biosynthesis; dUMP from dCTP (dUTP route): step 1/2. Its function is as follows. Catalyzes the deamination of dCTP to dUTP. This Psychromonas ingrahamii (strain DSM 17664 / CCUG 51855 / 37) protein is dCTP deaminase.